The following is a 529-amino-acid chain: Putative UPF0481 protein At3g02645 (529 aa).

N-linked (GlcNAc...) asparagine glycans are attached at residues Asn-365 and Asn-403. Residues 498 to 518 (ILAFLAAVLLLMLVSLQLFSL) traverse the membrane as a helical segment.

Belongs to the UPF0481 family.

The protein localises to the membrane. The protein is Putative UPF0481 protein At3g02645 of Arabidopsis thaliana (Mouse-ear cress).